We begin with the raw amino-acid sequence, 294 residues long: Phosphate import ATP-binding protein PstB (294 aa).

A compositionally biased stretch (polar residues) spans 1 to 18 (MSETMTNQNVVNEEQPFN). The segment at 1-24 (MSETMTNQNVVNEEQPFNESKHRS) is disordered. The region spanning 48 to 289 (LEVNKLKLFY…PSCKQTEDYI (242 aa)) is the ABC transporter domain. 80–87 (GPSGCGKS) contributes to the ATP binding site.

The protein belongs to the ABC transporter superfamily. Phosphate importer (TC 3.A.1.7) family. As to quaternary structure, the complex is composed of two ATP-binding proteins (PstB), two transmembrane proteins (PstC and PstA) and a solute-binding protein (PstS).

The protein resides in the cell inner membrane. The catalysed reaction is phosphate(out) + ATP + H2O = ADP + 2 phosphate(in) + H(+). Its function is as follows. Part of the ABC transporter complex PstSACB involved in phosphate import. Responsible for energy coupling to the transport system. The polypeptide is Phosphate import ATP-binding protein PstB (Hahella chejuensis (strain KCTC 2396)).